A 235-amino-acid chain; its full sequence is Large ribosomal subunit protein uL1 (235 aa).

It belongs to the universal ribosomal protein uL1 family. Part of the 50S ribosomal subunit.

Its function is as follows. Binds directly to 23S rRNA. The L1 stalk is quite mobile in the ribosome, and is involved in E site tRNA release. In terms of biological role, protein L1 is also a translational repressor protein, it controls the translation of the L11 operon by binding to its mRNA. This chain is Large ribosomal subunit protein uL1, found in Micrococcus luteus (strain ATCC 4698 / DSM 20030 / JCM 1464 / CCM 169 / CCUG 5858 / IAM 1056 / NBRC 3333 / NCIMB 9278 / NCTC 2665 / VKM Ac-2230) (Micrococcus lysodeikticus).